We begin with the raw amino-acid sequence, 605 residues long: Solute carrier family 23 member 1 (605 aa).

The segment at 1 to 30 (MKTPEDPGSPKQHEVVDSAGTSTRDRQAPL) is disordered. Topologically, residues 1 to 59 (MKTPEDPGSPKQHEVVDSAGTSTRDRQAPLPTEPKFDMLYKIEDVPPWYLCILLGFQHY) are cytoplasmic. Residues 60-80 (LTCFSGTIAVPFLLAEALCVG) form a helical membrane-spanning segment. At 81 to 88 (RDQHMVSQ) the chain is on the extracellular side. Residues 89–109 (LIGTIFTCVGITTLIQTTVGI) traverse the membrane as a helical segment. Arg-110 is a topological domain (cytoplasmic). A helical transmembrane segment spans residues 111–131 (LPLFQASAFAFLVPAKSILAL). The Extracellular segment spans residues 132–166 (ERWKCPSEEEIYGNWSMPLNTSHIWHPRIREVQGA). Residues Asn-145 and Asn-151 are each glycosylated (N-linked (GlcNAc...) asparagine). Residues 167 to 187 (IMVSSMVEVVIGLMGLPGALL) form a helical membrane-spanning segment. Topologically, residues 188–214 (SYIGPLTVTPTVSLIGLSVFQAAGDRA) are cytoplasmic. A helical transmembrane segment spans residues 215–232 (GSHWGISACSILLIVLFS). Over 233–236 (QYLR) the chain is Extracellular. The helical intramembrane region spans 237–250 (NLTFLLPVYRWGKG). The Extracellular portion of the chain corresponds to 251-257 (LTLFRVQ). A helical transmembrane segment spans residues 258 to 278 (IFKMFPIVLAIMTVWLLCYVL). Over 279–319 (TLTDVLPADPTVYGFQARTDARGDIMAISPWIRIPYPCQWG) the chain is Cytoplasmic. A helical transmembrane segment spans residues 320–340 (LPTVTVAAVLGMFSATLAGII). The Extracellular segment spans residues 341–365 (ESIGDYYACARLAGAPPPPVHAINR). Residues 366–386 (GIFTEGICCIIAGLLGTGNGS) form a helical membrane-spanning segment. Topologically, residues 387–409 (TSSSPNIGVLGITKVGSRRVVQY) are cytoplasmic. The helical transmembrane segment at 410–430 (GAGIMLILGAIGKFTALFASL) threads the bilayer. At 431-433 (PDP) the chain is on the extracellular side. A helical transmembrane segment spans residues 434–454 (ILGGMFCTLFGMITAVGLSNL). The Cytoplasmic segment spans residues 455–464 (QFVDMNSSRN). The helical transmembrane segment at 465–485 (LFVLGFSMFFGLTLPNYLDSN) threads the bilayer. Residues 486–497 (PGAINTGIPEVD) lie on the Extracellular side of the membrane. A helical transmembrane segment spans residues 498 to 518 (QILTVLLTTEMFVGGCLAFIL). Topologically, residues 519-605 (DNTVPGSPEE…IETGSVCTKV (87 aa)) are cytoplasmic. Thr-598 is modified (phosphothreonine). Ser-600 is subject to Phosphoserine. Position 603 is a phosphothreonine (Thr-603).

It belongs to the nucleobase:cation symporter-2 (NCS2) (TC 2.A.40) family. Post-translationally, phosphorylated. Expressed in kidney (at protein level).

It localises to the cell membrane. The enzyme catalyses L-ascorbate(out) + 2 Na(+)(out) = L-ascorbate(in) + 2 Na(+)(in). It carries out the reaction urate(out) + 2 Na(+)(out) = urate(in) + 2 Na(+)(in). In terms of biological role, sodium:L-ascorbate cotransporter. Mediates electrogenic uptake of vitamin C, with a stoichiometry of 2 Na(+) for each L-ascorbate. Has retained some ancestral activity toward nucleobases such as urate, an oxidized purine. Low-affinity high-capacity sodium:urate cotransporter, may regulate serum urate levels by serving as a renal urate re-absorber. The chain is Solute carrier family 23 member 1 (Slc23a1) from Mus musculus (Mouse).